A 203-amino-acid chain; its full sequence is Ribosomal RNA large subunit methyltransferase E (203 aa).

S-adenosyl-L-methionine-binding residues include Gly-59, Trp-61, Asp-79, Asn-95, and Asp-118. The Proton acceptor role is filled by Lys-158.

The protein belongs to the class I-like SAM-binding methyltransferase superfamily. RNA methyltransferase RlmE family.

It is found in the cytoplasm. It catalyses the reaction uridine(2552) in 23S rRNA + S-adenosyl-L-methionine = 2'-O-methyluridine(2552) in 23S rRNA + S-adenosyl-L-homocysteine + H(+). In terms of biological role, specifically methylates the uridine in position 2552 of 23S rRNA at the 2'-O position of the ribose in the fully assembled 50S ribosomal subunit. The polypeptide is Ribosomal RNA large subunit methyltransferase E (Wigglesworthia glossinidia brevipalpis).